A 135-amino-acid chain; its full sequence is MPTIAQLIRRERGIAQRKTKSPALKACPQRRGVCTRVYTTTPKKPNSALRKVARVRLTSGFEVTAYIPGVGHNLQEHSVVMIRGGRVKDLPGVRYHIIRGTLDTAGVKNRMQSRSKYGTKRPKPGQAAAPAGKKR.

Position 89 is a 3-methylthioaspartic acid (aspartate 89). The interval 103–135 is disordered; that stretch reads DTAGVKNRMQSRSKYGTKRPKPGQAAAPAGKKR. Residues 111 to 123 show a composition bias toward basic residues; sequence MQSRSKYGTKRPK. Residues 124–135 are compositionally biased toward low complexity; sequence PGQAAAPAGKKR.

This sequence belongs to the universal ribosomal protein uS12 family. As to quaternary structure, part of the 30S ribosomal subunit. Contacts proteins S8 and S17. May interact with IF1 in the 30S initiation complex.

With S4 and S5 plays an important role in translational accuracy. Functionally, interacts with and stabilizes bases of the 16S rRNA that are involved in tRNA selection in the A site and with the mRNA backbone. Located at the interface of the 30S and 50S subunits, it traverses the body of the 30S subunit contacting proteins on the other side and probably holding the rRNA structure together. The combined cluster of proteins S8, S12 and S17 appears to hold together the shoulder and platform of the 30S subunit. The sequence is that of Small ribosomal subunit protein uS12 from Gloeobacter violaceus (strain ATCC 29082 / PCC 7421).